Reading from the N-terminus, the 189-residue chain is Large ribosomal subunit protein bL9 (189 aa).

This sequence belongs to the bacterial ribosomal protein bL9 family.

Its function is as follows. Binds to the 23S rRNA. This is Large ribosomal subunit protein bL9 from Brucella abortus (strain S19).